We begin with the raw amino-acid sequence, 271 residues long: 3-deoxy-manno-octulosonate cytidylyltransferase (271 aa).

The protein belongs to the KdsB family.

It localises to the cytoplasm. It carries out the reaction 3-deoxy-alpha-D-manno-oct-2-ulosonate + CTP = CMP-3-deoxy-beta-D-manno-octulosonate + diphosphate. It functions in the pathway nucleotide-sugar biosynthesis; CMP-3-deoxy-D-manno-octulosonate biosynthesis; CMP-3-deoxy-D-manno-octulosonate from 3-deoxy-D-manno-octulosonate and CTP: step 1/1. The protein operates within bacterial outer membrane biogenesis; lipopolysaccharide biosynthesis. Functionally, activates KDO (a required 8-carbon sugar) for incorporation into bacterial lipopolysaccharide in Gram-negative bacteria. In Leptothrix cholodnii (strain ATCC 51168 / LMG 8142 / SP-6) (Leptothrix discophora (strain SP-6)), this protein is 3-deoxy-manno-octulosonate cytidylyltransferase.